The sequence spans 173 residues: NADH-ubiquinone oxidoreductase chain 6 (173 aa).

The next 6 helical transmembrane spans lie at 1–21, 27–47, 53–73, 82–102, 106–126, and 141–161; these read MIYF…AVAS, FAAL…VGYG, LVLF…SAAL, WGSW…LLVG, YGWW…MSVL, and GFLL…VLEI.

Belongs to the complex I subunit 6 family.

It localises to the mitochondrion membrane. It carries out the reaction a ubiquinone + NADH + 5 H(+)(in) = a ubiquinol + NAD(+) + 4 H(+)(out). Core subunit of the mitochondrial membrane respiratory chain NADH dehydrogenase (Complex I) that is believed to belong to the minimal assembly required for catalysis. Complex I functions in the transfer of electrons from NADH to the respiratory chain. The immediate electron acceptor for the enzyme is believed to be ubiquinone. The chain is NADH-ubiquinone oxidoreductase chain 6 (MT-ND6) from Latimeria chalumnae (Coelacanth).